Reading from the N-terminus, the 160-residue chain is Phosphopantetheine adenylyltransferase (160 aa).

S9 is a substrate binding site. ATP contacts are provided by residues 9–10 (SF) and H17. Residues K41, L73, and R87 each coordinate substrate. ATP contacts are provided by residues 88 to 90 (GLR), E98, and 123 to 129 (YTFLSSS).

Belongs to the bacterial CoaD family. In terms of assembly, homohexamer. The cofactor is Mg(2+).

Its subcellular location is the cytoplasm. The catalysed reaction is (R)-4'-phosphopantetheine + ATP + H(+) = 3'-dephospho-CoA + diphosphate. The protein operates within cofactor biosynthesis; coenzyme A biosynthesis; CoA from (R)-pantothenate: step 4/5. Its function is as follows. Reversibly transfers an adenylyl group from ATP to 4'-phosphopantetheine, yielding dephospho-CoA (dPCoA) and pyrophosphate. The chain is Phosphopantetheine adenylyltransferase from Dictyoglomus turgidum (strain DSM 6724 / Z-1310).